Reading from the N-terminus, the 86-residue chain is Putative membrane protein insertion efficiency factor (86 aa).

Belongs to the UPF0161 family.

It is found in the cell inner membrane. Its function is as follows. Could be involved in insertion of integral membrane proteins into the membrane. The protein is Putative membrane protein insertion efficiency factor of Ruegeria sp. (strain TM1040) (Silicibacter sp.).